The following is a 241-amino-acid chain: 2,3,4,5-tetrahydropyridine-2,6-dicarboxylate N-acetyltransferase (241 aa).

The protein belongs to the transferase hexapeptide repeat family. DapH subfamily.

It carries out the reaction (S)-2,3,4,5-tetrahydrodipicolinate + acetyl-CoA + H2O = L-2-acetamido-6-oxoheptanedioate + CoA. It participates in amino-acid biosynthesis; L-lysine biosynthesis via DAP pathway; LL-2,6-diaminopimelate from (S)-tetrahydrodipicolinate (acetylase route): step 1/3. Its function is as follows. Catalyzes the transfer of an acetyl group from acetyl-CoA to tetrahydrodipicolinate. This is 2,3,4,5-tetrahydropyridine-2,6-dicarboxylate N-acetyltransferase from Caldanaerobacter subterraneus subsp. tengcongensis (strain DSM 15242 / JCM 11007 / NBRC 100824 / MB4) (Thermoanaerobacter tengcongensis).